Here is a 158-residue protein sequence, read N- to C-terminus: Lipoprotein signal peptidase (158 aa).

4 helical membrane-spanning segments follow: residues 7–27 (LFWI…YWVV), 38–58 (ILPG…FSLF), 67–87 (WLSL…PVLD), and 95–115 (GLIL…GYVV). Catalysis depends on residues Asp116 and Asp132. Residues 125-145 (FAVFNMADSFISIGIVCLLLA) form a helical membrane-spanning segment.

The protein belongs to the peptidase A8 family.

It localises to the cell inner membrane. It carries out the reaction Release of signal peptides from bacterial membrane prolipoproteins. Hydrolyzes -Xaa-Yaa-Zaa-|-(S,diacylglyceryl)Cys-, in which Xaa is hydrophobic (preferably Leu), and Yaa (Ala or Ser) and Zaa (Gly or Ala) have small, neutral side chains.. It participates in protein modification; lipoprotein biosynthesis (signal peptide cleavage). In terms of biological role, this protein specifically catalyzes the removal of signal peptides from prolipoproteins. The polypeptide is Lipoprotein signal peptidase (Nostoc sp. (strain PCC 7120 / SAG 25.82 / UTEX 2576)).